The sequence spans 1114 residues: Isoleucine--tRNA ligase (1114 aa).

The short motif at 61 to 71 (PTANGQPGTHH) is the 'HIGH' region element. Positions 640–644 (KMSKH) match the 'KMSKS' region motif. Position 643 (Lys-643) interacts with ATP.

It belongs to the class-I aminoacyl-tRNA synthetase family. IleS type 2 subfamily. As to quaternary structure, monomer. It depends on Zn(2+) as a cofactor.

The protein localises to the cytoplasm. The enzyme catalyses tRNA(Ile) + L-isoleucine + ATP = L-isoleucyl-tRNA(Ile) + AMP + diphosphate. In terms of biological role, catalyzes the attachment of isoleucine to tRNA(Ile). As IleRS can inadvertently accommodate and process structurally similar amino acids such as valine, to avoid such errors it has two additional distinct tRNA(Ile)-dependent editing activities. One activity is designated as 'pretransfer' editing and involves the hydrolysis of activated Val-AMP. The other activity is designated 'posttransfer' editing and involves deacylation of mischarged Val-tRNA(Ile). This Cutibacterium acnes (strain DSM 16379 / KPA171202) (Propionibacterium acnes) protein is Isoleucine--tRNA ligase.